The following is a 374-amino-acid chain: Phospho-N-acetylmuramoyl-pentapeptide-transferase (374 aa).

The next 10 membrane-spanning stretches (helical) occupy residues 3–23 (AVIV…PIAI), 52–72 (MGGV…HLAL), 85–105 (PTIT…VGFI), 125–145 (LLGQ…FPST), 170–190 (IPAL…VVMA), 201–221 (LDGL…LIAF), 244–264 (PLEI…FLWW), 271–291 (IFMG…MAMS), 294–314 (TILL…SVVI), and 350–370 (FWII…SEFL).

Belongs to the glycosyltransferase 4 family. MraY subfamily. The cofactor is Mg(2+).

It localises to the cell membrane. It catalyses the reaction UDP-N-acetyl-alpha-D-muramoyl-L-alanyl-gamma-D-glutamyl-meso-2,6-diaminopimeloyl-D-alanyl-D-alanine + di-trans,octa-cis-undecaprenyl phosphate = di-trans,octa-cis-undecaprenyl diphospho-N-acetyl-alpha-D-muramoyl-L-alanyl-D-glutamyl-meso-2,6-diaminopimeloyl-D-alanyl-D-alanine + UMP. It functions in the pathway cell wall biogenesis; peptidoglycan biosynthesis. Functionally, catalyzes the initial step of the lipid cycle reactions in the biosynthesis of the cell wall peptidoglycan: transfers peptidoglycan precursor phospho-MurNAc-pentapeptide from UDP-MurNAc-pentapeptide onto the lipid carrier undecaprenyl phosphate, yielding undecaprenyl-pyrophosphoryl-MurNAc-pentapeptide, known as lipid I. This Salinispora arenicola (strain CNS-205) protein is Phospho-N-acetylmuramoyl-pentapeptide-transferase.